Reading from the N-terminus, the 263-residue chain is MAYSACFLHQSALASSAARSSSSSSSQRHVSLSKPVQIICKAQQSHEDDNSAVSRRLALTLLVGAAAVGSKVSPADAAYGEAANVFGKPKTNTDFLPYNGDGFKVQVPAKWNPSKEIEYPGQVLRFEDNFDATSNLNVMVTPTDKKSITDYGSPEEFLSQVNYLLGKQAYFGETASEGGFDNNAVATANILESSSQEVGGKPYYYLSVLTRTADGDEGGKHQLITATVNGGKLYICKAQAGDKRWFKGARKFVESAATSFSVA.

Residue Ser-153 is modified to Phosphoserine.

It belongs to the PsbP family. As to quaternary structure, interacts with WAK1.

It localises to the plastid. Its subcellular location is the chloroplast thylakoid lumen. Its function is as follows. May be involved in the regulation of photosystem II. The protein is Oxygen-evolving enhancer protein 2-1, chloroplastic (PSBP1) of Arabidopsis thaliana (Mouse-ear cress).